A 333-amino-acid chain; its full sequence is Fructose-1,6-bisphosphatase class 1 (333 aa).

Positions 92, 113, 115, and 116 each coordinate Mg(2+). Residues 116–119, Asn-209, Tyr-242, and Lys-272 contribute to the substrate site; that span reads DGSS. Residue Glu-278 coordinates Mg(2+).

This sequence belongs to the FBPase class 1 family. Homotetramer. It depends on Mg(2+) as a cofactor.

It is found in the cytoplasm. It carries out the reaction beta-D-fructose 1,6-bisphosphate + H2O = beta-D-fructose 6-phosphate + phosphate. It functions in the pathway carbohydrate biosynthesis; Calvin cycle. This is Fructose-1,6-bisphosphatase class 1 from Chlorobaculum tepidum (strain ATCC 49652 / DSM 12025 / NBRC 103806 / TLS) (Chlorobium tepidum).